The sequence spans 374 residues: Queuine tRNA-ribosyltransferase (374 aa).

The Proton acceptor role is filled by Asp-89. Residues Asp-89–Phe-93, Asp-143, Gln-187, and Gly-214 contribute to the substrate site. The tract at residues Gly-245–Asp-251 is RNA binding. Asp-264 (nucleophile) is an active-site residue. Residues Thr-269–Arg-273 form an RNA binding; important for wobble base 34 recognition region. 4 residues coordinate Zn(2+): Cys-302, Cys-304, Cys-307, and His-333.

This sequence belongs to the queuine tRNA-ribosyltransferase family. As to quaternary structure, homodimer. Within each dimer, one monomer is responsible for RNA recognition and catalysis, while the other monomer binds to the replacement base PreQ1. The cofactor is Zn(2+).

It carries out the reaction 7-aminomethyl-7-carbaguanine + guanosine(34) in tRNA = 7-aminomethyl-7-carbaguanosine(34) in tRNA + guanine. Its pathway is tRNA modification; tRNA-queuosine biosynthesis. Its function is as follows. Catalyzes the base-exchange of a guanine (G) residue with the queuine precursor 7-aminomethyl-7-deazaguanine (PreQ1) at position 34 (anticodon wobble position) in tRNAs with GU(N) anticodons (tRNA-Asp, -Asn, -His and -Tyr). Catalysis occurs through a double-displacement mechanism. The nucleophile active site attacks the C1' of nucleotide 34 to detach the guanine base from the RNA, forming a covalent enzyme-RNA intermediate. The proton acceptor active site deprotonates the incoming PreQ1, allowing a nucleophilic attack on the C1' of the ribose to form the product. After dissociation, two additional enzymatic reactions on the tRNA convert PreQ1 to queuine (Q), resulting in the hypermodified nucleoside queuosine (7-(((4,5-cis-dihydroxy-2-cyclopenten-1-yl)amino)methyl)-7-deazaguanosine). The sequence is that of Queuine tRNA-ribosyltransferase from Shewanella loihica (strain ATCC BAA-1088 / PV-4).